We begin with the raw amino-acid sequence, 241 residues long: Large ribosomal subunit protein uL3 (241 aa).

Disordered stretches follow at residues 139–164 (VSHR…KMPG) and 215–241 (DAPK…QEGV). Residue Gln151 is modified to N5-methylglutamine. Residues 225 to 241 (ANGGEEAAAPAAEQEGV) are compositionally biased toward low complexity.

The protein belongs to the universal ribosomal protein uL3 family. Part of the 50S ribosomal subunit. Forms a cluster with proteins L14 and L19. Post-translationally, methylated by PrmB.

Functionally, one of the primary rRNA binding proteins, it binds directly near the 3'-end of the 23S rRNA, where it nucleates assembly of the 50S subunit. The protein is Large ribosomal subunit protein uL3 of Rhodopseudomonas palustris (strain HaA2).